The chain runs to 236 residues: tRNA1(Val) (adenine(37)-N6)-methyltransferase (236 aa).

Belongs to the methyltransferase superfamily. tRNA (adenine-N(6)-)-methyltransferase family.

It is found in the cytoplasm. The enzyme catalyses adenosine(37) in tRNA1(Val) + S-adenosyl-L-methionine = N(6)-methyladenosine(37) in tRNA1(Val) + S-adenosyl-L-homocysteine + H(+). Specifically methylates the adenine in position 37 of tRNA(1)(Val) (anticodon cmo5UAC). In Actinobacillus succinogenes (strain ATCC 55618 / DSM 22257 / CCUG 43843 / 130Z), this protein is tRNA1(Val) (adenine(37)-N6)-methyltransferase.